The chain runs to 122 residues: Small ribosomal subunit protein uS13 (122 aa).

Positions 95-122 (GLPVRGQRTHTNARTRKGPAKSIAGKKK) are disordered.

It belongs to the universal ribosomal protein uS13 family. Part of the 30S ribosomal subunit. Forms a loose heterodimer with protein S19. Forms two bridges to the 50S subunit in the 70S ribosome.

In terms of biological role, located at the top of the head of the 30S subunit, it contacts several helices of the 16S rRNA. In the 70S ribosome it contacts the 23S rRNA (bridge B1a) and protein L5 of the 50S subunit (bridge B1b), connecting the 2 subunits; these bridges are implicated in subunit movement. Contacts the tRNAs in the A and P-sites. The protein is Small ribosomal subunit protein uS13 of Nitrobacter winogradskyi (strain ATCC 25391 / DSM 10237 / CIP 104748 / NCIMB 11846 / Nb-255).